A 142-amino-acid polypeptide reads, in one-letter code: Hemoglobin subunit alpha (142 aa).

Residues 2-142 form the Globin domain; it reads VLSPADKSNV…VSTVLTSKYR (141 aa). Position 4 is a phosphoserine (S4). 2 positions are modified to N6-succinyllysine: K8 and K12. Position 17 is an N6-acetyllysine; alternate (K17). K17 carries the post-translational modification N6-succinyllysine; alternate. Y25 carries the phosphotyrosine modification. The residue at position 36 (S36) is a Phosphoserine. K41 is subject to N6-succinyllysine. S50 carries the post-translational modification Phosphoserine. H59 contacts O2. H88 serves as a coordination point for heme b. A Phosphoserine modification is found at S103. The residue at position 109 (T109) is a Phosphothreonine. Residues S125 and S132 each carry the phosphoserine modification. Residues T135 and T138 each carry the phosphothreonine modification. S139 carries the phosphoserine modification.

Belongs to the globin family. Heterotetramer of two alpha chains and two beta chains. In terms of tissue distribution, red blood cells.

Functionally, involved in oxygen transport from the lung to the various peripheral tissues. Hemopressin acts as an antagonist peptide of the cannabinoid receptor CNR1. Hemopressin-binding efficiently blocks cannabinoid receptor CNR1 and subsequent signaling. This is Hemoglobin subunit alpha (HBA) from Ateles geoffroyi (Black-handed spider monkey).